Consider the following 374-residue polypeptide: MEILRIEPTPSPNTMKVVLSYTREDKLSNTYKKVEETQPRFINQLLSIDGITSIFHVMNFLAVDKAPKADWEVILPDIKAAFSDANKVLESVNEPQIDNHFGEIKAELLTFKGIPYQIKLTSADQELREQLPQTYVDHMTQAQTAHDNIVFMRKWLDLGNRYGNIEEVMDGVLEEVLATYPESQLPVLVKHALEENHATNNYHFYRHVSLDEYHATDNWKTRLRMLNHFPKPTFEDIPLLDLALSDEKVPVRRQAIVLLGMIESKEILPYLYKGLRDKSPAVRRTAGDCISDLGYPEALPEMVLLLDDPQKIVRWRAAMFIFDEGNAEQLPALKAHINDNAFEVKLQIEMAISRIENGDEALGSVWKQMANRTI.

It belongs to the CvfC family.

Required for hemolysin production. The sequence is that of Conserved virulence factor C (cvfC) from Staphylococcus aureus (strain N315).